Here is a 159-residue protein sequence, read N- to C-terminus: Putative phosphatidylinositol-3-phosphatase (159 aa).

Residues 1–16 (MKRPSFLPVLIGTGFG) form the signal peptide. 4 helical membrane-spanning segments follow: residues 30 to 50 (LLASIIWIALYFLLPFTALLW), 54 to 74 (ALVVLFTFAGIWAANKLESCW), 104 to 124 (WYVIAAFALFRIFDIVKPLGV), and 134 to 154 (VGVMMDDVLAGVYSFILIAVA).

It localises to the membrane. It carries out the reaction a 1,2-diacyl-sn-glycero-3-phospho-(1D-myo-inositol-3-phosphate) + H2O = a 1,2-diacyl-sn-glycero-3-phospho-(1D-myo-inositol) + phosphate. Functionally, may be responsible for the conversion of phosphatidylinositol phosphate diacylglycerol (PIP-DAG) to phosphatidylinositol diacylglycerol (PI-DAG), making it a key enzyme in the inositol glycerophospholipid biosynthesis pathway. The polypeptide is Putative phosphatidylinositol-3-phosphatase (Bacteroides thetaiotaomicron (strain ATCC 29148 / DSM 2079 / JCM 5827 / CCUG 10774 / NCTC 10582 / VPI-5482 / E50)).